Here is a 142-residue protein sequence, read N- to C-terminus: Large ribosomal subunit protein uL11 (142 aa).

Belongs to the universal ribosomal protein uL11 family. As to quaternary structure, part of the ribosomal stalk of the 50S ribosomal subunit. Interacts with L10 and the large rRNA to form the base of the stalk. L10 forms an elongated spine to which L12 dimers bind in a sequential fashion forming a multimeric L10(L12)X complex. One or more lysine residues are methylated.

In terms of biological role, forms part of the ribosomal stalk which helps the ribosome interact with GTP-bound translation factors. The chain is Large ribosomal subunit protein uL11 from Alcanivorax borkumensis (strain ATCC 700651 / DSM 11573 / NCIMB 13689 / SK2).